The chain runs to 326 residues: Beta-ketoacyl-[acyl-carrier-protein] synthase III (326 aa).

Residues C111 and H253 contribute to the active site. Residues 254–258 form an ACP-binding region; the sequence is QANSR. N283 is a catalytic residue.

This sequence belongs to the thiolase-like superfamily. FabH family. In terms of assembly, homodimer.

It localises to the cytoplasm. It carries out the reaction malonyl-[ACP] + acetyl-CoA + H(+) = 3-oxobutanoyl-[ACP] + CO2 + CoA. The protein operates within lipid metabolism; fatty acid biosynthesis. In terms of biological role, catalyzes the condensation reaction of fatty acid synthesis by the addition to an acyl acceptor of two carbons from malonyl-ACP. Catalyzes the first condensation reaction which initiates fatty acid synthesis and may therefore play a role in governing the total rate of fatty acid production. Possesses both acetoacetyl-ACP synthase and acetyl transacylase activities. Its substrate specificity determines the biosynthesis of branched-chain and/or straight-chain of fatty acids. In Latilactobacillus sakei subsp. sakei (strain 23K) (Lactobacillus sakei subsp. sakei), this protein is Beta-ketoacyl-[acyl-carrier-protein] synthase III.